Reading from the N-terminus, the 295-residue chain is Probable WRKY transcription factor 46 (295 aa).

Residues 98–166 (QENGSIDDGH…YLGNHTCNNI (69 aa)) constitute a DNA-binding region (WRKY).

The protein belongs to the WRKY group III family. As to quaternary structure, binds to BZR2/BES1 to cooperatively regulate the expression of target genes. Phosphorylated and destabilized by ASK7/BIN2. Expressed in guard cells, hypocotyls, and in the vascular tissues of cotyledon and root. Mostly expressed in roots, at lower levels in leaves and petioles, and, to a lower extent, in stems, flowers and siliques.

It localises to the nucleus. Transcription factor involved in the regulation of osmotic stress responses and stomatal movement. Interacts specifically with the W box (5'-(T)TGAC[CT]-3'), a frequently occurring elicitor-responsive cis-acting element. Positive regulator of EDS1-dependent defense against E.amylovora. Together with WRKY70 and WRKY53, promotes resistance to P.syringae, probably by enhancing salicylic acid (SA)- dependent genes. Contributes to the suppression of jasmonic acid (MeJA)-induced expression of PDF1.2. Together with WRKY54 and WRKY70, promotes brassinosteroid (BR)-regulated plant growth but prevent drought response by modulating gene expression. The sequence is that of Probable WRKY transcription factor 46 (WRKY46) from Arabidopsis thaliana (Mouse-ear cress).